The following is a 313-amino-acid chain: Kazal-type serine protease inhibitor domain-containing protein 1 (313 aa).

Positions 1 to 37 (MPRVFTGLPANYAAPTLALSLLLPLLLVVWTQLPVSA) are cleaved as a signal peptide. An IGFBP N-terminal domain is found at 56-136 (EGEGCAPCRP…EVPEPLCVCR (81 aa)). 7 disulfides stabilise this stretch: C60/C83, C63/C85, C68/C86, C74/C89, C97/C115, C109/C133, and C142/C175. Residues 127-177 (EVPEPLCVCRSQRPLCGSDGRTYAQICRLQEAARARLDANLTVVHPGPCES) enclose the Kazal-like domain. N-linked (GlcNAc...) asparagine glycosylation is found at N166 and N190. One can recognise an Ig-like C2-type domain in the interval 179–276 (PQILSQPHNI…GQAEASATLT (98 aa)). Residues C200 and C260 are joined by a disulfide bond. N-linked (GlcNAc...) asparagine glycosylation occurs at N284. The disordered stretch occupies residues 290–313 (QLQSRSLFPEEEEEAESEELGDYY). Positions 298 to 313 (PEEEEEAESEELGDYY) are enriched in acidic residues.

Highly expressed in the spleen. Moderately expressed in the skin, lung and urinary bladder. Weakly expressed in the brain, tongue, esophagus, stomach, large intestine, liver and bone. Expressed in osteoblastic cells during bone regeneration. Expressed in secretory osteoblasts in the tooth.

It localises to the secreted. The protein resides in the extracellular space. It is found in the extracellular matrix. Involved in the proliferation of osteoblasts during bone formation and bone regeneration. Promotes matrix assembly. This Mus musculus (Mouse) protein is Kazal-type serine protease inhibitor domain-containing protein 1 (Kazald1).